The following is a 477-amino-acid chain: Trigger factor (477 aa).

The PPIase FKBP-type domain maps to 169–254 (EDRVTIDYLG…VKEVAKPNEL (86 aa)). The tract at residues 435–477 (VSKEELTAEDEDAASEAKPAKKAAPKKKAAPKKKADEGKSEEA) is disordered. Residues 454-466 (AKKAAPKKKAAPK) show a composition bias toward basic residues. The segment covering 467 to 477 (KKADEGKSEEA) has biased composition (basic and acidic residues).

This sequence belongs to the FKBP-type PPIase family. Tig subfamily.

Its subcellular location is the cytoplasm. It catalyses the reaction [protein]-peptidylproline (omega=180) = [protein]-peptidylproline (omega=0). Functionally, involved in protein export. Acts as a chaperone by maintaining the newly synthesized protein in an open conformation. Functions as a peptidyl-prolyl cis-trans isomerase. The chain is Trigger factor from Brucella anthropi (strain ATCC 49188 / DSM 6882 / CCUG 24695 / JCM 21032 / LMG 3331 / NBRC 15819 / NCTC 12168 / Alc 37) (Ochrobactrum anthropi).